Consider the following 515-residue polypeptide: Slowpoke-binding protein (515 aa).

A disordered region spans residues 1–31; sequence MFKFNKAAQQQRIDNRNSAVTGHDPFVRPPV. Residues 7 to 20 show a composition bias toward polar residues; it reads AAQQQRIDNRNSAV. 2 positions are modified to phosphoserine: Ser54 and Ser79. Residues 73–82 show a composition bias toward polar residues; the sequence is SSNRSASSEQ. A disordered region spans residues 73–94; it reads SSNRSASSEQDNSDLSEHSEKS. The segment at 191-203 is interaction with Slo; the sequence is NWFLVTDASVRTD. The disordered stretch occupies residues 483 to 503; the sequence is SLSEANSPCTPPSTPHDRRTG.

As to quaternary structure, interacts specifically with Slo; which activates Slo activity. Interacts with 14-3-3-zeta when phosphorylated. Forms a heterotetrameric complex containing phosphorylated Slob, Slo and 14-3-3-zeta, which represses Slo activity due to the indirect interaction between Slo and 14-3-3-zeta. In terms of processing, phosphorylated. Phosphorylation of Ser-54 and Ser-79 is required for the interaction with 14-3-3-zeta but not with that of Slo. Expressed in head. In larval brain, it is expressed in the mushroom body. Also expressed in larval muscles.

It is found in the cytoplasm. Functionally, regulator of calcium-activated channel Slo. Increases or decreases the voltage sensitivity of Slo, depending on the absence or presence of 14-3-3-zeta in the complex, respectively. The protein is Slowpoke-binding protein (Slob) of Drosophila melanogaster (Fruit fly).